We begin with the raw amino-acid sequence, 443 residues long: Tol-Pal system protein TolB (443 aa).

The signal sequence occupies residues 1–18 (MRNIVYFILTLFSLTSYA).

The protein belongs to the TolB family. As to quaternary structure, the Tol-Pal system is composed of five core proteins: the inner membrane proteins TolA, TolQ and TolR, the periplasmic protein TolB and the outer membrane protein Pal. They form a network linking the inner and outer membranes and the peptidoglycan layer.

It localises to the periplasm. Part of the Tol-Pal system, which plays a role in outer membrane invagination during cell division and is important for maintaining outer membrane integrity. This chain is Tol-Pal system protein TolB, found in Rickettsia prowazekii (strain Madrid E).